We begin with the raw amino-acid sequence, 298 residues long: ATP synthase F(1) complex subunit gamma, mitochondrial (298 aa).

Residues 1 to 25 (MFSRASVVGLSACAVQPQWIQVRNM) constitute a mitochondrion transit peptide. Residue lysine 39 is modified to N6-acetyllysine. An N6-succinyllysine modification is found at lysine 49. Lysine 55 carries the N6-acetyllysine modification. Position 115 is an N6-acetyllysine; alternate (lysine 115). The residue at position 115 (lysine 115) is an N6-succinyllysine; alternate. At lysine 138 the chain carries N6-acetyllysine. Serine 146 is subject to Phosphoserine. An N6-acetyllysine; alternate modification is found at lysine 154. The residue at position 154 (lysine 154) is an N6-succinyllysine; alternate. Lysine 197 is modified (N6-acetyllysine). The residue at position 270 (lysine 270) is an N6-succinyllysine.

The protein belongs to the ATPase gamma chain family. Component of the ATP synthase complex composed at least of ATP5F1A/subunit alpha, ATP5F1B/subunit beta, ATP5MC1/subunit c (homooctomer), MT-ATP6/subunit a, MT-ATP8/subunit 8, ATP5ME/subunit e, ATP5MF/subunit f, ATP5MG/subunit g, ATP5MK/subunit k, ATP5MJ/subunit j, ATP5F1C/subunit gamma, ATP5F1D/subunit delta, ATP5F1E/subunit epsilon, ATP5PF/subunit F6, ATP5PB/subunit b, ATP5PD/subunit d, ATP5PO/subunit OSCP. ATP synthase complex consists of a soluble F(1) head domain (subunits alpha(3) and beta(3)) - the catalytic core - and a membrane F(0) domain - the membrane proton channel (subunits c, a, 8, e, f, g, k and j). These two domains are linked by a central stalk (subunits gamma, delta, and epsilon) rotating inside the F1 region and a stationary peripheral stalk (subunits F6, b, d, and OSCP). Interacts with FLVCR2; this interaction occurs in the absence of heme and is disrupted upon heme binding.

The protein localises to the mitochondrion inner membrane. Its function is as follows. Subunit gamma, of the mitochondrial membrane ATP synthase complex (F(1)F(0) ATP synthase or Complex V) that produces ATP from ADP in the presence of a proton gradient across the membrane which is generated by electron transport complexes of the respiratory chain. ATP synthase complex consist of a soluble F(1) head domain - the catalytic core - and a membrane F(1) domain - the membrane proton channel. These two domains are linked by a central stalk rotating inside the F(1) region and a stationary peripheral stalk. During catalysis, ATP synthesis in the catalytic domain of F(1) is coupled via a rotary mechanism of the central stalk subunits to proton translocation. In vivo, can only synthesize ATP although its ATP hydrolase activity can be activated artificially in vitro. With the central stalk subunit delta, is essential for the biogenesis of F(1) catalytic part of the ATP synthase complex namely in the formation of F1 assembly intermediate. This Mus musculus (Mouse) protein is ATP synthase F(1) complex subunit gamma, mitochondrial.